The following is a 200-amino-acid chain: Large ribosomal subunit protein bL25 (200 aa).

It belongs to the bacterial ribosomal protein bL25 family. CTC subfamily. As to quaternary structure, part of the 50S ribosomal subunit; part of the 5S rRNA/L5/L18/L25 subcomplex. Contacts the 5S rRNA. Binds to the 5S rRNA independently of L5 and L18.

This is one of the proteins that binds to the 5S RNA in the ribosome where it forms part of the central protuberance. This Pseudomonas fluorescens (strain Pf0-1) protein is Large ribosomal subunit protein bL25.